A 1449-amino-acid polypeptide reads, in one-letter code: Gag-Pol polyprotein (1449 aa).

Residue glycine 2 is the site of N-myristoyl glycine; by host attachment. The interval 7-31 (VLTGGKLDQWESIYLRPGGKKKYRM) is interaction with Gp41. The interaction with host CALM1 stretch occupies residues 8–43 (LTGGKLDQWESIYLRPGGKKKYRMKHLVWASRELER). Positions 12-19 (KLDQWESI) are interaction with host AP3D1. The interval 14 to 33 (DQWESIYLRPGGKKKYRMKH) is interaction with membrane phosphatidylinositol 4,5-bisphosphate and RNA. Residues 16–22 (WESIYLR) carry the Nuclear export signal motif. The short motif at 26–32 (KKKYRMK) is the Nuclear localization signal element. The segment at 73 to 77 (EELRS) is interaction with membrane phosphatidylinositol 4,5-bisphosphate. The residue at position 134 (tyrosine 134) is a Phosphotyrosine; by host. The interval 191 to 229 (NTVGGHQAAMQMLKEVINEEAADWDRTHPVPVGPLPPGQ) is interaction with human PPIA/CYPA and NUP153. Residues 279–365 (YSPVSILEIK…GGPAHKARVL (87 aa)) form a dimerization/Multimerization of capsid protein p24 region. 2 consecutive CCHC-type zinc fingers follow at residues 393–410 (IKCF…NCKA) and 414–431 (GGCW…DCKN). Residues 447–461 (ETRKLPPDNNKERAH) are compositionally biased toward basic and acidic residues. Residues 447–489 (ETRKLPPDNNKERAHSPATRELWVSGGEEHTGEGDAGEPGEDR) form a disordered region. A dimerization of protease region spans residues 499 to 503 (PQITL). The region spanning 518–587 (REALLDTGAD…TPVNIIGRNL (70 aa)) is the Peptidase A2 domain. Aspartate 523 functions as the For protease activity; shared with dimeric partner in the catalytic mechanism. Dimerization of protease stretches follow at residues 547-553 (GIGGFIK) and 586-598 (NLLT…LNFP). A Reverse transcriptase domain is found at 641–831 (EGKISRIGPE…PPFLWMGYEL (191 aa)). Mg(2+) is bound by residues aspartate 707, aspartate 782, and aspartate 783. The interval 824–832 (FLWMGYELH) is RT 'primer grip'. A Tryptophan repeat motif motif is present at residues 995–1011 (WEAWWTDHWQATWIPEW). The RNase H type-1 domain occupies 1031–1154 (ISGAETFYVD…VDKLVSSGIR (124 aa)). Mg(2+) is bound by residues aspartate 1040, glutamate 1075, aspartate 1095, and aspartate 1146. Residues 1160–1201 (DGIEKAQEDHDRYHSNWKAMASDFNLPPIVAKEIVASCDKCQ) form an Integrase-type zinc finger. Histidine 1169, histidine 1173, cysteine 1197, and cysteine 1200 together coordinate Zn(2+). The Integrase catalytic domain occupies 1211-1361 (VNCSPGVWQL…TAGERIIDII (151 aa)). Residues aspartate 1221, aspartate 1273, and glutamate 1309 each contribute to the Mg(2+) site. Residues 1380–1427 (FRVYYRDSRDPIWKGPAKLLWKGEGAVVIQDNGDIKVVPRRKAKIIRD) constitute a DNA-binding region (integrase-type).

In terms of assembly, homotrimer; further assembles as hexamers of trimers. Interacts with gp41 (via C-terminus). Interacts with host CALM1; this interaction induces a conformational change in the Matrix protein, triggering exposure of the myristate group. Interacts with host AP3D1; this interaction allows the polyprotein trafficking to multivesicular bodies during virus assembly. Part of the pre-integration complex (PIC) which is composed of viral genome, matrix protein, Vpr and integrase. As to quaternary structure, homodimer; the homodimer further multimerizes as homohexamers or homopentamers. Interacts with human PPIA/CYPA; This interaction stabilizes the capsid. Interacts with human NUP153. Interacts with host PDZD8; this interaction stabilizes the capsid. Interacts with monkey TRIM5; this interaction destabilizes the capsid. Homodimer, whose active site consists of two apposed aspartic acid residues. In terms of assembly, heterodimer of p66 RT and p51 RT (RT p66/p51). Heterodimerization of RT is essential for DNA polymerase activity. The overall folding of the subdomains is similar in p66 RT and p51 RT but the spatial arrangements of the subdomains are dramatically different. As to quaternary structure, homotetramer; may further associate as a homohexadecamer. Part of the pre-integration complex (PIC) which is composed of viral genome, matrix protein, Vpr and integrase. Interacts with human SMARCB1/INI1 and human PSIP1/LEDGF isoform 1. Interacts with human KPNA3; this interaction might play a role in nuclear import of the pre-integration complex. Interacts with human NUP153; this interaction might play a role in nuclear import of the pre-integration complex. Requires Mg(2+) as cofactor. Post-translationally, specific enzymatic cleavages by the viral protease yield mature proteins. The protease is released by autocatalytic cleavage. The polyprotein is cleaved during and after budding, this process is termed maturation. Proteolytic cleavage of p66 RT removes the RNase H domain to yield the p51 RT subunit. Nucleocapsid protein p7 might be further cleaved after virus entry. Tyrosine phosphorylated presumably in the virion by a host kinase. Phosphorylation is apparently not a major regulator of membrane association. In terms of processing, phosphorylated possibly by host MAPK1; this phosphorylation is necessary for Pin1-mediated virion uncoating. Post-translationally, methylated by host PRMT6, impairing its function by reducing RNA annealing and the initiation of reverse transcription.

The protein resides in the host cell membrane. It localises to the host endosome. The protein localises to the host multivesicular body. It is found in the virion membrane. Its subcellular location is the host nucleus. The protein resides in the host cytoplasm. It localises to the virion. It carries out the reaction Specific for a P1 residue that is hydrophobic, and P1' variable, but often Pro.. The catalysed reaction is Endohydrolysis of RNA in RNA/DNA hybrids. Three different cleavage modes: 1. sequence-specific internal cleavage of RNA. Human immunodeficiency virus type 1 and Moloney murine leukemia virus enzymes prefer to cleave the RNA strand one nucleotide away from the RNA-DNA junction. 2. RNA 5'-end directed cleavage 13-19 nucleotides from the RNA end. 3. DNA 3'-end directed cleavage 15-20 nucleotides away from the primer terminus.. It catalyses the reaction 3'-end directed exonucleolytic cleavage of viral RNA-DNA hybrid.. The enzyme catalyses DNA(n) + a 2'-deoxyribonucleoside 5'-triphosphate = DNA(n+1) + diphosphate. Its activity is regulated as follows. Protease: The viral protease is inhibited by many synthetic protease inhibitors (PIs), such as amprenavir, atazanavir, indinavir, loprinavir, nelfinavir, ritonavir and saquinavir. Use of protease inhibitors in tritherapy regimens permit more ambitious therapeutic strategies. Reverse transcriptase/ribonuclease H: RT can be inhibited either by nucleoside RT inhibitors (NRTIs) or by non nucleoside RT inhibitors (NNRTIs). NRTIs act as chain terminators, whereas NNRTIs inhibit DNA polymerization by binding a small hydrophobic pocket near the RT active site and inducing an allosteric change in this region. Classical NRTIs are abacavir, adefovir (PMEA), didanosine (ddI), lamivudine (3TC), stavudine (d4T), tenofovir (PMPA), zalcitabine (ddC), and zidovudine (AZT). Classical NNRTIs are atevirdine (BHAP U-87201E), delavirdine, efavirenz (DMP-266), emivirine (I-EBU), and nevirapine (BI-RG-587). The tritherapies used as a basic effective treatment of AIDS associate two NRTIs and one NNRTI. Its function is as follows. Mediates, with Gag polyprotein, the essential events in virion assembly, including binding the plasma membrane, making the protein-protein interactions necessary to create spherical particles, recruiting the viral Env proteins, and packaging the genomic RNA via direct interactions with the RNA packaging sequence (Psi). Gag-Pol polyprotein may regulate its own translation, by the binding genomic RNA in the 5'-UTR. At low concentration, the polyprotein would promote translation, whereas at high concentration, the polyprotein would encapsidate genomic RNA and then shut off translation. In terms of biological role, targets the polyprotein to the plasma membrane via a multipartite membrane-binding signal, that includes its myristoylated N-terminus. Matrix protein is part of the pre-integration complex. Implicated in the release from host cell mediated by Vpu. Binds to RNA. Functionally, forms the conical core that encapsulates the genomic RNA-nucleocapsid complex in the virion. Most core are conical, with only 7% tubular. The core is constituted by capsid protein hexamer subunits. The core is disassembled soon after virion entry. Host restriction factors such as TRIM5-alpha or TRIMCyp bind retroviral capsids and cause premature capsid disassembly, leading to blocks in reverse transcription. Capsid restriction by TRIM5 is one of the factors which restricts HIV-1 to the human species. Host PIN1 apparently facilitates the virion uncoating. On the other hand, interactions with PDZD8 or CYPA stabilize the capsid. Encapsulates and protects viral dimeric unspliced genomic RNA (gRNA). Binds these RNAs through its zinc fingers. Acts as a nucleic acid chaperone which is involved in rearangement of nucleic acid secondary structure during gRNA retrotranscription. Also facilitates template switch leading to recombination. As part of the polyprotein, participates in gRNA dimerization, packaging, tRNA incorporation and virion assembly. Its function is as follows. Aspartyl protease that mediates proteolytic cleavages of Gag and Gag-Pol polyproteins during or shortly after the release of the virion from the plasma membrane. Cleavages take place as an ordered, step-wise cascade to yield mature proteins. This process is called maturation. Displays maximal activity during the budding process just prior to particle release from the cell. Also cleaves Nef and Vif, probably concomitantly with viral structural proteins on maturation of virus particles. Hydrolyzes host EIF4GI and PABP1 in order to shut off the capped cellular mRNA translation. The resulting inhibition of cellular protein synthesis serves to ensure maximal viral gene expression and to evade host immune response. Also mediates cleavage of host YTHDF3. Mediates cleavage of host CARD8, thereby activating the CARD8 inflammasome, leading to the clearance of latent HIV-1 in patient CD4(+) T-cells after viral reactivation; in contrast, HIV-1 can evade CARD8-sensing when its protease remains inactive in infected cells prior to viral budding. In terms of biological role, multifunctional enzyme that converts the viral RNA genome into dsDNA in the cytoplasm, shortly after virus entry into the cell. This enzyme displays a DNA polymerase activity that can copy either DNA or RNA templates, and a ribonuclease H (RNase H) activity that cleaves the RNA strand of RNA-DNA heteroduplexes in a partially processive 3' to 5' endonucleasic mode. Conversion of viral genomic RNA into dsDNA requires many steps. A tRNA(3)-Lys binds to the primer-binding site (PBS) situated at the 5'-end of the viral RNA. RT uses the 3' end of the tRNA primer to perform a short round of RNA-dependent minus-strand DNA synthesis. The reading proceeds through the U5 region and ends after the repeated (R) region which is present at both ends of viral RNA. The portion of the RNA-DNA heteroduplex is digested by the RNase H, resulting in a ssDNA product attached to the tRNA primer. This ssDNA/tRNA hybridizes with the identical R region situated at the 3' end of viral RNA. This template exchange, known as minus-strand DNA strong stop transfer, can be either intra- or intermolecular. RT uses the 3' end of this newly synthesized short ssDNA to perform the RNA-dependent minus-strand DNA synthesis of the whole template. RNase H digests the RNA template except for two polypurine tracts (PPTs) situated at the 5'-end and near the center of the genome. It is not clear if both polymerase and RNase H activities are simultaneous. RNase H probably can proceed both in a polymerase-dependent (RNA cut into small fragments by the same RT performing DNA synthesis) and a polymerase-independent mode (cleavage of remaining RNA fragments by free RTs). Secondly, RT performs DNA-directed plus-strand DNA synthesis using the PPTs that have not been removed by RNase H as primers. PPTs and tRNA primers are then removed by RNase H. The 3' and 5' ssDNA PBS regions hybridize to form a circular dsDNA intermediate. Strand displacement synthesis by RT to the PBS and PPT ends produces a blunt ended, linear dsDNA copy of the viral genome that includes long terminal repeats (LTRs) at both ends. Functionally, catalyzes viral DNA integration into the host chromosome, by performing a series of DNA cutting and joining reactions. This enzyme activity takes place after virion entry into a cell and reverse transcription of the RNA genome in dsDNA. The first step in the integration process is 3' processing. This step requires a complex comprising the viral genome, matrix protein, Vpr and integrase. This complex is called the pre-integration complex (PIC). The integrase protein removes 2 nucleotides from each 3' end of the viral DNA, leaving recessed CA OH's at the 3' ends. In the second step, the PIC enters cell nucleus. This process is mediated through integrase and Vpr proteins, and allows the virus to infect a non dividing cell. This ability to enter the nucleus is specific of lentiviruses, other retroviruses cannot and rely on cell division to access cell chromosomes. In the third step, termed strand transfer, the integrase protein joins the previously processed 3' ends to the 5' ends of strands of target cellular DNA at the site of integration. The 5'-ends are produced by integrase-catalyzed staggered cuts, 5 bp apart. A Y-shaped, gapped, recombination intermediate results, with the 5'-ends of the viral DNA strands and the 3' ends of target DNA strands remaining unjoined, flanking a gap of 5 bp. The last step is viral DNA integration into host chromosome. This involves host DNA repair synthesis in which the 5 bp gaps between the unjoined strands are filled in and then ligated. Since this process occurs at both cuts flanking the HIV genome, a 5 bp duplication of host DNA is produced at the ends of HIV-1 integration. Alternatively, Integrase may catalyze the excision of viral DNA just after strand transfer, this is termed disintegration. This chain is Gag-Pol polyprotein (gag-pol), found in Human immunodeficiency virus type 1 group N (isolate YBF30) (HIV-1).